The sequence spans 434 residues: Gamma-glutamyl phosphate reductase (434 aa).

It belongs to the gamma-glutamyl phosphate reductase family.

The protein localises to the cytoplasm. It catalyses the reaction L-glutamate 5-semialdehyde + phosphate + NADP(+) = L-glutamyl 5-phosphate + NADPH + H(+). It participates in amino-acid biosynthesis; L-proline biosynthesis; L-glutamate 5-semialdehyde from L-glutamate: step 2/2. Its function is as follows. Catalyzes the NADPH-dependent reduction of L-glutamate 5-phosphate into L-glutamate 5-semialdehyde and phosphate. The product spontaneously undergoes cyclization to form 1-pyrroline-5-carboxylate. The polypeptide is Gamma-glutamyl phosphate reductase (Rhodopirellula baltica (strain DSM 10527 / NCIMB 13988 / SH1)).